A 201-amino-acid polypeptide reads, in one-letter code: Ribosomal RNA large subunit methyltransferase E (201 aa).

Residues Gly40, Trp42, Asp62, Asp78, and Asp101 each contribute to the S-adenosyl-L-methionine site. Residue Lys141 is the Proton acceptor of the active site.

This sequence belongs to the class I-like SAM-binding methyltransferase superfamily. RNA methyltransferase RlmE family.

Its subcellular location is the cytoplasm. It carries out the reaction uridine(2552) in 23S rRNA + S-adenosyl-L-methionine = 2'-O-methyluridine(2552) in 23S rRNA + S-adenosyl-L-homocysteine + H(+). Its function is as follows. Specifically methylates the uridine in position 2552 of 23S rRNA at the 2'-O position of the ribose in the fully assembled 50S ribosomal subunit. This Anaplasma marginale (strain Florida) protein is Ribosomal RNA large subunit methyltransferase E.